We begin with the raw amino-acid sequence, 277 residues long: 2,3,4,5-tetrahydropyridine-2,6-dicarboxylate N-succinyltransferase (277 aa).

Substrate is bound by residues arginine 106 and aspartate 143.

It belongs to the transferase hexapeptide repeat family. As to quaternary structure, homotrimer.

Its subcellular location is the cytoplasm. The catalysed reaction is (S)-2,3,4,5-tetrahydrodipicolinate + succinyl-CoA + H2O = (S)-2-succinylamino-6-oxoheptanedioate + CoA. It participates in amino-acid biosynthesis; L-lysine biosynthesis via DAP pathway; LL-2,6-diaminopimelate from (S)-tetrahydrodipicolinate (succinylase route): step 1/3. This Xylella fastidiosa (strain Temecula1 / ATCC 700964) protein is 2,3,4,5-tetrahydropyridine-2,6-dicarboxylate N-succinyltransferase.